The sequence spans 85 residues: Cell division protein ZapA (85 aa).

A coiled-coil region spans residues 60–85 (AVNVVHDYLKLKEQYEKLEIQLKEKE).

It belongs to the ZapA family. Type 2 subfamily. As to quaternary structure, homodimer. Interacts with FtsZ.

The protein resides in the cytoplasm. Activator of cell division through the inhibition of FtsZ GTPase activity, therefore promoting FtsZ assembly into bundles of protofilaments necessary for the formation of the division Z ring. It is recruited early at mid-cell but it is not essential for cell division. The sequence is that of Cell division protein ZapA from Bacillus pumilus (strain SAFR-032).